Reading from the N-terminus, the 275-residue chain is Elongation factor Ts (275 aa).

An involved in Mg(2+) ion dislocation from EF-Tu region spans residues 80-83 (TDFV).

It belongs to the EF-Ts family.

It is found in the cytoplasm. Its function is as follows. Associates with the EF-Tu.GDP complex and induces the exchange of GDP to GTP. It remains bound to the aminoacyl-tRNA.EF-Tu.GTP complex up to the GTP hydrolysis stage on the ribosome. In Clavibacter sepedonicus (Clavibacter michiganensis subsp. sepedonicus), this protein is Elongation factor Ts.